A 201-amino-acid polypeptide reads, in one-letter code: Cytochrome c4 (201 aa).

A signal peptide spans 1–20 (MNKLLVSLLLTLGLTGLAHA). Positions 34, 37, 38, 77, 130, 133, 134, and 178 each coordinate heme c.

In terms of processing, binds 2 heme c groups covalently per subunit.

Its subcellular location is the periplasm. Functionally, diheme, high potential cytochrome c believed to be an intermediate electron donor to terminal oxidation systems. The sequence is that of Cytochrome c4 (cc4) from Pseudomonas aeruginosa (strain ATCC 15692 / DSM 22644 / CIP 104116 / JCM 14847 / LMG 12228 / 1C / PRS 101 / PAO1).